The chain runs to 576 residues: Alpha-1,3-arabinosyltransferase XAT3 (576 aa).

Over 1-19 (MKAGERPKLVRGVRQESRR) the chain is Cytoplasmic. A helical; Signal-anchor for type II membrane protein transmembrane segment spans residues 20–40 (FRLLVIVVGFFLVSLTFVFVS). Residues 41–576 (KPDAILFSLN…LLEALDNLNP (536 aa)) are Lumenal-facing. The interval 64–171 (IQQKVNEPSG…KHKVTLPTVS (108 aa)) is disordered. 3 stretches are compositionally biased toward basic and acidic residues: residues 73–98 (GESR…DAKP), 126–138 (THNK…KSHQ), and 147–163 (GESK…EQKH). 3 N-linked (GlcNAc...) asparagine glycosylation sites follow: N172, N375, and N443.

Belongs to the glycosyltransferase 61 family.

The protein resides in the golgi apparatus membrane. Its pathway is glycan metabolism. Glycosyltransferase involved in the arabinosylation of xylan, the major hemicellulose (non-cellulosic component) of primary and secondary walls of angiosperms. Possesses alpha-1,3-arabinosyltransferase activity, transferring an arabinofuranose residue to the xylan backbone. The chain is Alpha-1,3-arabinosyltransferase XAT3 from Oryza sativa subsp. japonica (Rice).